The following is a 546-amino-acid chain: Pyrophosphate--fructose 6-phosphate 1-phosphotransferase (546 aa).

Position 80 (Gly80) interacts with diphosphate. Asp174 provides a ligand contact to Mg(2+). Substrate-binding positions include 202–204 (TID), 241–242 (KY), 249–251 (MGR), Glu310, and 420–423 (YEGR). The active-site Proton acceptor is the Asp204.

It belongs to the phosphofructokinase type A (PFKA) family. PPi-dependent PFK group II subfamily. Clade 'Long' sub-subfamily. Homodimer. Mg(2+) serves as cofactor. It depends on Mn(2+) as a cofactor.

Its subcellular location is the cytoplasm. The catalysed reaction is beta-D-fructose 6-phosphate + diphosphate = beta-D-fructose 1,6-bisphosphate + phosphate + H(+). Its pathway is carbohydrate degradation; glycolysis; D-glyceraldehyde 3-phosphate and glycerone phosphate from D-glucose: step 3/4. Non-allosteric. Competitively inhibited by PPi, Pi and fructose 1,6-bisphosphate. Functionally, catalyzes the phosphorylation of D-fructose 6-phosphate, the first committing step of glycolysis. Uses inorganic phosphate (PPi) as phosphoryl donor instead of ATP like common ATP-dependent phosphofructokinases (ATP-PFKs), which renders the reaction reversible, and can thus function both in glycolysis and gluconeogenesis. Consistently, PPi-PFK can replace the enzymes of both the forward (ATP-PFK) and reverse (fructose-bisphosphatase (FBPase)) reactions. This chain is Pyrophosphate--fructose 6-phosphate 1-phosphotransferase, found in Entamoeba histolytica (strain ATCC 30459 / HM-1:IMSS / ABRM).